A 156-amino-acid chain; its full sequence is Arginine repressor (156 aa).

This sequence belongs to the ArgR family.

It localises to the cytoplasm. It participates in amino-acid biosynthesis; L-arginine biosynthesis [regulation]. Regulates arginine biosynthesis genes. This is Arginine repressor from Salmonella agona (strain SL483).